Consider the following 1162-residue polypeptide: Leptin receptor (1162 aa).

The N-terminal stretch at 1–21 (MTCQKFYVVLLHWEFLYVITA) is a signal peptide. The Extracellular portion of the chain corresponds to 22 to 839 (LNLAYPTSPW…DIAKQQNDAG (818 aa)). 5 disulfides stabilise this stretch: C37-C90, C89-C99, C131-C142, C186-C195, and C188-C193. 4 N-linked (GlcNAc...) asparagine glycosylation sites follow: N55, N56, N73, and N98. N-linked (GlcNAc...) asparagine glycosylation occurs at N187. A Fibronectin type-III 1 domain is found at 238 to 331 (PPLGLRMEVT…LPQLFTTQDV (94 aa)). 3 N-linked (GlcNAc...) asparagine glycosylation sites follow: N275, N345, and N356. Intrachain disulfides connect C350/C410 and C411/C416. N431 carries N-linked (GlcNAc...) asparagine glycosylation. 3 cysteine pairs are disulfide-bonded: C434/C445, C471/C526, and C486/C496. Residues 465–482 (HRRSLYCPDNPSIRPTSE) are leptin-binding. N-linked (GlcNAc...) asparagine glycans are attached at residues N514, N622, N657, N668, N686, N695, N698, and N726. Fibronectin type-III domains follow at residues 537–632 (PPSN…TLVM), 637–729 (PMRG…NLTF), and 738–831 (AVQS…KDDI). The WSXWS motif motif lies at 620–624 (WSNWS). Residues 840 to 860 (LYVIVPIIISSCVLLLGTLLI) traverse the membrane as a helical segment. At 861 to 1162 (SHQRMKKLFW…IENKMCDLTV (302 aa)) the chain is on the cytoplasmic side. Residues 869–877 (FWDDVPNPK) carry the Box 1 motif motif. S880 carries the phosphoserine modification. Residues 891 to 896 (ETFEHL) are required for JAK2 activation. Positions 896 to 904 (LFTKHAESV) are required for STAT3 phosphorylation. Y985 is modified (phosphotyrosine; by JAK2). Position 1077 is a phosphotyrosine (Y1077). Y1138 carries the post-translational modification Phosphotyrosine; by JAK2.

Belongs to the type I cytokine receptor family. Type 2 subfamily. In terms of assembly, present as a mixture of monomers and dimers. The phosphorylated receptor binds a number of SH2 domain-containing proteins such as JAK2, STAT3, PTPN11, and SOCS3. Interaction with SOCS3 inhibits JAK/STAT signaling and MAPK cascade. On ligand binding, phosphorylated on two conserved C-terminal tyrosine residues (isoform B only) by JAK2. Tyr-985 is required for complete binding and activation of PTPN11, ERK/FOS activation,for interaction with SOCS3 and SOCS3 mediated inhibition of leptin signaling. Phosphorylation on Tyr-1138 is required for STAT3 binding/activation. Phosphorylation of Tyr-1077 has a more accessory role. Isoform B is expressed in kidney, liver, lung, ovary, spleen and uterus. Increased level in uterus during gestation. Isoform A and isoform C are predominantly expressed in cerebral microvessels and choroid plexus, with lower levels in cortex, cerebellum and hypothalamus but also liver and lung. Isoform F is expressed at high levels in brain, liver and spleen and less in stomach, kidney, thymus, heart, lung and hypothalamus.

It is found in the cell membrane. Its subcellular location is the basolateral cell membrane. The protein resides in the secreted. Functionally, receptor for hormone LEP/leptin. On ligand binding, mediates LEP central and peripheral effects through the activation of different signaling pathways such as JAK2/STAT3 and MAPK cascade/FOS. In the hypothalamus, LEP acts as an appetite-regulating factor that induces a decrease in food intake and an increase in energy consumption by inducing anorexinogenic factors and suppressing orexigenic neuropeptides, also regulates bone mass and secretion of hypothalamo-pituitary-adrenal hormones. In the periphery, increases basal metabolism, influences reproductive function, regulates pancreatic beta-cell function and insulin secretion, is pro-angiogenic and affects innate and adaptive immunity. Control of energy homeostasis and melanocortin production (stimulation of POMC and full repression of AgRP transcription) is mediated by STAT3 signaling, whereas distinct signals regulate NPY and the control of fertility, growth and glucose homeostasis. Involved in the regulation of counter-regulatory response to hypoglycemia by inhibiting neurons of the parabrachial nucleus. Has a specific effect on T lymphocyte responses, differentially regulating the proliferation of naive and memory T-cells. Leptin increases Th1 and suppresses Th2 cytokine production. May transport LEP across the blood-brain barrier. Binds LEP and mediates LEP endocytosis. Does not induce phosphorylation of and activate STAT3. Its function is as follows. Antagonizes Isoform A and isoform B-mediated LEP binding and endocytosis. This Rattus norvegicus (Rat) protein is Leptin receptor (Lepr).